The following is a 440-amino-acid chain: C4-dicarboxylate transport protein (440 aa).

The next 8 helical transmembrane spans lie at 8 to 28 (LYLQVLLAVVLGALVGHLFPA), 40 to 60 (FIKLVKMLIAPIVFATVVTGI), 74 to 94 (LKGLLYFEVLTTVALAIGLVV), 147 to 167 (GDILQVLLFSVLFGAALAALK), 187 to 207 (IVGFVMRLAPVGAFGAMAFTV), 221 to 241 (LIACFYATSALFVVLMLGLVL), 288 to 308 (VVGLVVPMGYSFNLDGTSIYL), and 354 to 374 (AATLSAVGNIPVAGLALLLGV). Positions 419-440 (DEVEPANDPEPPAMAAGLGLHG) are disordered.

The protein belongs to the dicarboxylate/amino acid:cation symporter (DAACS) (TC 2.A.23) family.

The protein resides in the cell inner membrane. Responsible for the transport of dicarboxylates such as succinate, fumarate, and malate from the periplasm across the membrane. The protein is C4-dicarboxylate transport protein of Anaeromyxobacter dehalogenans (strain 2CP-C).